The sequence spans 132 residues: Capsid protein (132 aa).

Belongs to the Leviviricetes capsid protein family. In terms of assembly, homodimer. The capsid protein dimer binds to the viral RNA via an operator hairpin, but also many other RNA sequences in the viral genome.

It localises to the virion. Its function is as follows. Capsid protein self-assembles to form an icosahedral capsid with a T=3 symmetry, about 26 nm in diameter, and consisting of 89 capsid proteins dimers (178 capsid proteins). Involved in viral genome encapsidation through the interaction between a capsid protein dimer and the multiple packaging signals present in the RNA genome. Binding of the capsid proteins to the viral RNA induces a conformational change required for efficient T=3 shell formation. The capsid also contains 1 copy of the A2 maturation protein. In terms of biological role, acts as a translational repressor of viral replicase synthesis late in infection. This latter function is the result of capsid protein interaction with an RNA hairpin which contains the replicase ribosome-binding site. The protein is Capsid protein of Enterobacteria phage SP (Bacteriophage SP).